The primary structure comprises 444 residues: Argininosuccinate synthase (444 aa).

Residues 18–26 (AFSGGLDTS) and Ala44 each bind ATP. Position 100 (Tyr100) interacts with L-citrulline. ATP is bound by residues Gly130 and Thr132. The L-aspartate site is built by Thr132, Asn136, and Asp137. Position 136 (Asn136) interacts with L-citrulline. Asp137 is an ATP binding site. 2 residues coordinate L-citrulline: Arg140 and Ser193. Position 195 (Asp195) interacts with ATP. The L-citrulline site is built by Thr202, Glu204, and Glu281.

Belongs to the argininosuccinate synthase family. Type 2 subfamily. As to quaternary structure, homotetramer.

It localises to the cytoplasm. The enzyme catalyses L-citrulline + L-aspartate + ATP = 2-(N(omega)-L-arginino)succinate + AMP + diphosphate + H(+). Its pathway is amino-acid biosynthesis; L-arginine biosynthesis; L-arginine from L-ornithine and carbamoyl phosphate: step 2/3. The polypeptide is Argininosuccinate synthase (Haemophilus influenzae (strain PittGG)).